A 126-amino-acid chain; its full sequence is Protein VraC (126 aa).

The sequence is that of Protein VraC from Staphylococcus haemolyticus (strain JCSC1435).